We begin with the raw amino-acid sequence, 577 residues long: DNA primase (577 aa).

Residues 40-64 form a CHC2-type zinc finger; sequence CPFHHDKTPSFTVSNEKQFYYCFGC. A Toprim domain is found at 255-337; the sequence is VYLLVVEGYI…KKTLKFILLP (83 aa). Mg(2+) contacts are provided by glutamate 261, aspartate 305, and aspartate 307.

It belongs to the DnaG primase family. In terms of assembly, monomer. Interacts with DnaB. Requires Zn(2+) as cofactor. It depends on Mg(2+) as a cofactor.

It catalyses the reaction ssDNA + n NTP = ssDNA/pppN(pN)n-1 hybrid + (n-1) diphosphate.. RNA polymerase that catalyzes the synthesis of short RNA molecules used as primers for DNA polymerase during DNA replication. This is DNA primase from Buchnera aphidicola subsp. Acyrthosiphon pisum (strain APS) (Acyrthosiphon pisum symbiotic bacterium).